The following is a 130-amino-acid chain: Small ribosomal subunit protein uS9 (130 aa).

It belongs to the universal ribosomal protein uS9 family.

The polypeptide is Small ribosomal subunit protein uS9 (Streptococcus pyogenes serotype M1).